A 387-amino-acid chain; its full sequence is Prostatic acid phosphatase (387 aa).

A signal peptide spans 1–34; sequence MRNAALLMTRATSLRLSLLLLLSFLPDLDGGVRA. Arg45 contacts substrate. The active-site Nucleophile is His46. Position 49 (Arg49) interacts with substrate. Asn96 carries N-linked (GlcNAc...) asparagine glycosylation. A substrate-binding site is contributed by Arg113. Cystine bridges form between Cys163/Cys374, Cys217/Cys315, and Cys349/Cys353. Asn222 is a glycosylation site (N-linked (GlcNAc...) asparagine). His291 is a substrate binding site. The Proton donor role is filled by Asp292. The N-linked (GlcNAc...) asparagine glycan is linked to Asn335.

It belongs to the histidine acid phosphatase family. In terms of assembly, homodimer; dimer formation is required for phosphatase activity.

The protein resides in the secreted. It catalyses the reaction a phosphate monoester + H2O = an alcohol + phosphate. The catalysed reaction is 1-(9Z-octadecenoyl)-sn-glycero-3-phosphate + H2O = 1-(9Z-octadecenoyl)-sn-glycerol + phosphate. The enzyme catalyses O-phospho-L-tyrosyl-[protein] + H2O = L-tyrosyl-[protein] + phosphate. Its function is as follows. A non-specific tyrosine phosphatase that dephosphorylates a diverse number of substrates under acidic conditions (pH 4-6) including alkyl, aryl, and acyl orthophosphate monoesters and phosphorylated proteins. Has lipid phosphatase activity and inactivates lysophosphatidic acid in seminal plasma. The chain is Prostatic acid phosphatase (ACP3) from Bos taurus (Bovine).